The sequence spans 123 residues: Ribosome-binding factor A (123 aa).

This sequence belongs to the RbfA family. In terms of assembly, monomer. Binds 30S ribosomal subunits, but not 50S ribosomal subunits or 70S ribosomes.

It is found in the cytoplasm. In terms of biological role, one of several proteins that assist in the late maturation steps of the functional core of the 30S ribosomal subunit. Associates with free 30S ribosomal subunits (but not with 30S subunits that are part of 70S ribosomes or polysomes). Required for efficient processing of 16S rRNA. May interact with the 5'-terminal helix region of 16S rRNA. The protein is Ribosome-binding factor A of Neisseria gonorrhoeae (strain ATCC 700825 / FA 1090).